Here is a 192-residue protein sequence, read N- to C-terminus: UPF0301 protein Rru_A3059 (192 aa).

The protein belongs to the UPF0301 (AlgH) family.

The polypeptide is UPF0301 protein Rru_A3059 (Rhodospirillum rubrum (strain ATCC 11170 / ATH 1.1.1 / DSM 467 / LMG 4362 / NCIMB 8255 / S1)).